The sequence spans 132 residues: Replication enhancer protein (132 aa).

The protein belongs to the geminiviridae replication enhancer protein family. Homooligomer. Interacts with the replication-associated protein (REP). Interacts with host proliferating cell nuclear antigen (PCNA). Interacts with host retinoblastoma-related protein 1 (RBR1), and may thereby deregulate the host cell cycle. Oligomerization and interaction with PCNA are necessary for optimal replication enhancement.

Its function is as follows. Increases viral DNA accumulation. Enhances infectivity and symptom expression. This is Replication enhancer protein from Abutilon (Upland cotton).